The primary structure comprises 180 residues: MKVLAITGYKPFELGIFKQDDKALYYIKKAIKNRLIAFLDEGLEWILISGQLGVELWAAEAAYDLQEEYPDLKVAVITPFYEQEKNWKEPNKEQYEAVLAQADYEASLTHRPYESPLQFKQKNQFFIDKSDGLLLLYDPEKEGSPKYMLGTAEKRREQDGYPIYFITMDDLRVTVEEDSY.

This sequence belongs to the UPF0398 family.

In Bacillus subtilis (strain 168), this protein is UPF0398 protein YpsA (ypsA).